Consider the following 608-residue polypeptide: MCGIVGIVGNQPVSERLVEALKRLEYRGYDSAGVATIDAGTLQRRRAEGKLVNLESRLREEPLAGTIGIAHTRWATHGAPTERNAHPHFTEGVAVVHNGIIENFAELKDELAAGGAEFQTETDTEVVAHLLTKYRRDGLGRREAMHAMLKRVKGAYALAVLFEDDPSTIMAARNGPPLAIGHGSGEMFLGSDAIALAPFTNEITYLIDGDWAVIGKTGVHIFDFDGNVVERPRQISTAAAFLVDKGNHRHFMEKEIYEQPEVIAHALGHYVNFIENRVVPISDAIDFGKVPSLAISACGTAYLAGLIGKYWFERYARLPVEIDVASEFRYREIPLSPQSAALFISQSGETADTLASLRYCKEHGLKIGAVVNARESTIARESDAVFPILAGPEIGVASTKAFTCQLAVLAALAVGAGKARGTISGEEEQALVKSLAEMPRIMGQVLNSIQPKIESLSRELSKCHDVLYLGRGTSFPLAMEGALKLKEISYIHAEGYAAGELKHGPIALIDENMPVIVIAPHDRFFDKTVSNMQEVAARGGRIILITDEKGAAASKLDTMHTIVLPEVDEIIAPMIFSLPLQLLAYHTAVFMGTDVDQPRNLAKSVTVE.

The active-site Nucleophile; for GATase activity is C2. The Glutamine amidotransferase type-2 domain occupies 2–217 (CGIVGIVGNQ…DGDWAVIGKT (216 aa)). SIS domains are found at residues 281–422 (ISDA…ARGT) and 456–598 (LSRE…VDQP). Catalysis depends on K603, which acts as the For Fru-6P isomerization activity.

The protein localises to the cytoplasm. The enzyme catalyses D-fructose 6-phosphate + L-glutamine = D-glucosamine 6-phosphate + L-glutamate. In terms of biological role, involved in the production of the root hair deformation (HAD) factor specifically on medicago. This is Glutamine--fructose-6-phosphate aminotransferase [isomerizing] (nodM) from Rhizobium meliloti (strain 1021) (Ensifer meliloti).